A 329-amino-acid chain; its full sequence is Neuropeptides B/W receptor type 1 (329 aa).

Residues 1–43 lie on the Extracellular side of the membrane; that stretch reads MHNLTLFESGGDNVSCGGSSLGCPNGSSLAPLPLPQPLAVAVP. Residues Asn-3, Asn-13, and Asn-25 are each glycosylated (N-linked (GlcNAc...) asparagine). Residues 44–64 form a helical membrane-spanning segment; sequence VVYGVICAVGLAGNSAVLYVL. Residues 65 to 75 lie on the Cytoplasmic side of the membrane; the sequence is LRTPRMKTVTN. A helical membrane pass occupies residues 76 to 96; that stretch reads VFILNLAIADELFTLVLPINI. The Extracellular portion of the chain corresponds to 97–112; it reads ADFLLRRWPFGEVMCK. An intrachain disulfide couples Cys-111 to Cys-190. The helical transmembrane segment at 113–133 threads the bilayer; sequence LIVAVDQYNTFSSLYFLAVMS. The Cytoplasmic segment spans residues 134 to 158; the sequence is ADRYLVVLATAESRRVSGRTYGAAR. Residues 159–179 form a helical membrane-spanning segment; the sequence is AVSLAVWALVTLVVLPFAVFA. At 180-209 the chain is on the extracellular side; the sequence is RLDEEQGRRQCVLVFPQPEAFWWRASRLYT. Residues 210–230 traverse the membrane as a helical segment; that stretch reads LVLGFAIPVTTICALYTTLLC. The Cytoplasmic segment spans residues 231–250; sequence RLRAIQLDSHAKALDRAKKR. Residues 251–271 traverse the membrane as a helical segment; the sequence is VTLLVAAILAVCLLCWTPYHL. Residues 272 to 289 lie on the Extracellular side of the membrane; sequence STIVALTTDLPQTPLVIG. The helical transmembrane segment at 290–312 threads the bilayer; the sequence is ISYFITSLSYANSCLNPFLYAFL. Topologically, residues 313-329 are cytoplasmic; the sequence is DDSFRRSLRQLVSCRSA.

It belongs to the G-protein coupled receptor 1 family.

Its subcellular location is the cell membrane. Functionally, interacts specifically with a number of opioid ligands. Receptor for neuropeptides B and W, which may be involved in neuroendocrine system regulation, food intake and the organization of other signals. The polypeptide is Neuropeptides B/W receptor type 1 (Npbwr1) (Mus musculus (Mouse)).